The following is an 89-amino-acid chain: Large ribosomal subunit protein bL27 (89 aa).

Residues 1–26 form a disordered region; it reads MAHKKGVGSSRNGRDSESKRLGVKEG. Residues 12–26 are compositionally biased toward basic and acidic residues; it reads NGRDSESKRLGVKEG.

Belongs to the bacterial ribosomal protein bL27 family.

This is Large ribosomal subunit protein bL27 from Desulforamulus reducens (strain ATCC BAA-1160 / DSM 100696 / MI-1) (Desulfotomaculum reducens).